Here is a 254-residue protein sequence, read N- to C-terminus: Mitochondrial cardiolipin hydrolase (254 aa).

Residues 1-9 are Mitochondrial intermembrane-facing; the sequence is MERFRWQVA. Residues 1–43 are required for mitochondrial localization; that stretch reads MERFRWQVAAVAAVGLALALEALPSVLCWLRAGRRQQQRPPRR. A helical transmembrane segment spans residues 10 to 32; that stretch reads AVAAVGLALALEALPSVLCWLRA. Topologically, residues 33-254 are cytoplasmic; sequence GRRQQQRPPR…SKCSHHLSQV (222 aa). The C3H1-type; atypical zinc finger occupies 49–82; that stretch reads PSQVTCTEALLQAPGEAPSGPPAGCRCSLPHGES. The region spanning 155 to 182 is the PLD phosphodiesterase domain; sequence DLGYMHHKFAIVDKKVLITGSLNWTTQA. Active-site residues include histidine 160, lysine 162, and aspartate 167.

The protein belongs to the phospholipase D family. MitoPLD/Zucchini subfamily. Homodimer. Interacts with MOV10L1. Interacts with MIGA1 and MIGA2; possibly facilitating homodimer formation. Interacts with GK2.

It localises to the mitochondrion outer membrane. The protein localises to the nucleus membrane. Its subcellular location is the cell membrane. The protein resides in the golgi apparatus. It catalyses the reaction a cardiolipin + H2O = a 1,2-diacyl-sn-glycero-3-phospho-(1'-sn-glycerol) + a 1,2-diacyl-sn-glycero-3-phosphate + H(+). Its activity is regulated as follows. Single stranded DNA (ssDNA) hydrolase activity does not depend upon, but is stimulated by the presence of Ca(2+) and Mn(2+). MIGA1 and MIGA2 increase PLD6 self-association affinity and affects the homodimer conformation facilitating its phospholipase activity over the nuclease activity. MYC induces its expression and stimulates its phospholipase activity. In terms of biological role, presents phospholipase and nuclease activities, depending on the different physiological conditions. Interaction with Mitoguardin (MIGA1 or MIGA2) affects the dimer conformation, facilitating the lipase activity over the nuclease activity. Plays a key role in mitochondrial fusion and fission via its phospholipase activity. In its phospholipase role, it uses the mitochondrial lipid cardiolipin as substrate to generate phosphatidate (PA or 1,2-diacyl-sn-glycero-3-phosphate), a second messenger signaling lipid. Production of PA facilitates Mitofusin-mediated fusion, whereas the cleavage of PA by the Lipin family of phosphatases produces diacylgycerol (DAG) which promotes mitochondrial fission. Both Lipin and DAG regulate mitochondrial dynamics and membrane fusion/fission, important processes for adapting mitochondrial metabolism to changes in cell physiology. Mitochondrial fusion enables cells to cope with the increased nucleotide demand during DNA synthesis. Mitochondrial function and dynamics are closely associated with biological processes such as cell growth, proliferation, and differentiation. Mediator of MYC activity, promotes mitochondrial fusion and activates AMPK which in turn inhibits YAP/TAZ, thereby inducing cell growth and proliferation. The endonuclease activity plays a critical role in PIWI-interacting RNA (piRNA) biogenesis during spermatogenesis. Implicated in spermatogenesis and sperm fertility in testicular germ cells, its single strand-specific nuclease activity is critical for the biogenesis/maturation of PIWI-interacting RNA (piRNA). MOV10L1 selectively binds to piRNA precursors and funnels them to the endonuclease that catalyzes the first cleavage step of piRNA processing to generate piRNA intermediate fragments that are subsequently loaded to Piwi proteins. Cleaves either DNA or RNA substrates with similar affinity, producing a 5' phosphate end, in this way it participates in the processing of primary piRNA transcripts. piRNAs provide essential protection against the activity of mobile genetic elements. piRNA-mediated transposon silencing is thus critical for maintaining genome stability, in particular in germline cells when transposons are mobilized as a consequence of wide-spread genomic demethylation. PA may act as signaling molecule in the recognition/transport of the precursor RNAs of primary piRNAs. Interacts with tesmin in testes, suggesting a role in spermatogenesis via association with its interacting partner. In Canis lupus familiaris (Dog), this protein is Mitochondrial cardiolipin hydrolase (PLD6).